Here is a 278-residue protein sequence, read N- to C-terminus: Small ribosomal subunit protein uS3 (278 aa).

The KH type-2 domain maps to 39-107 (LRKAISKKYV…KVQLNIVEIS (69 aa)). Positions 255–278 (AEIPAEEKPKRVVKKAENITKEEE) are disordered.

This sequence belongs to the universal ribosomal protein uS3 family. In terms of assembly, part of the 30S ribosomal subunit. Forms a tight complex with proteins S10 and S14.

Binds the lower part of the 30S subunit head. Binds mRNA in the 70S ribosome, positioning it for translation. This is Small ribosomal subunit protein uS3 from Dehalococcoides mccartyi (strain CBDB1).